A 150-amino-acid polypeptide reads, in one-letter code: Ribonuclease HI (150 aa).

Residues 1–141 (MKLINAYTDG…VDVLARGQAM (141 aa)) enclose the RNase H type-1 domain. Aspartate 9, glutamate 47, aspartate 69, and aspartate 133 together coordinate Mg(2+).

The protein belongs to the RNase H family. As to quaternary structure, monomer. The cofactor is Mg(2+).

The protein localises to the cytoplasm. It carries out the reaction Endonucleolytic cleavage to 5'-phosphomonoester.. Endonuclease that specifically degrades the RNA of RNA-DNA hybrids. This chain is Ribonuclease HI, found in Xylella fastidiosa (strain Temecula1 / ATCC 700964).